The primary structure comprises 436 residues: ATP-dependent RNA helicase SUB2 (436 aa).

Acidic residues predominate over residues 1–16; that stretch reads MSAEEDLIDYSDEELN. The tract at residues 1-33 is disordered; sequence MSAEEDLIDYSDEELNTNETAAPAADSNGKKGE. The Q motif signature appears at 52 to 80; that stretch reads TGFRDFLLKPELLRAIGDCGFEHPSEVQQ. In terms of domain architecture, Helicase ATP-binding spans 83–258; it reads IPQAMLGGDI…KKFMQNPTEH (176 aa). An ATP-binding site is contributed by 96–103; that stretch reads AKSGLGKT. The DEAD box signature appears at 205 to 208; it reads DECD. Residues 270–431 form the Helicase C-terminal domain; it reads GLQQYFVALE…EFPKDGIDAS (162 aa).

The protein belongs to the DEAD box helicase family. DECD subfamily.

The protein localises to the nucleus. The catalysed reaction is ATP + H2O = ADP + phosphate + H(+). In terms of biological role, ATP-binding RNA helicase involved in transcription elongation and required for the export of mRNA out of the nucleus. SUB2 also plays a role in pre-mRNA splicing and spliceosome assembly. May be involved in rDNA and telomeric silencing, and maintenance of genome integrity. This chain is ATP-dependent RNA helicase SUB2 (SUB2), found in Pyricularia oryzae (strain 70-15 / ATCC MYA-4617 / FGSC 8958) (Rice blast fungus).